Here is a 350-residue protein sequence, read N- to C-terminus: tRNA N6-adenosine threonylcarbamoyltransferase (350 aa).

Positions 109 and 113 each coordinate Fe cation. Substrate-binding positions include Thr-136–Gly-140, Asp-169, Gly-182, Asp-186, and Asn-284. Residue Asp-312 participates in Fe cation binding.

Belongs to the KAE1 / TsaD family. Requires Fe(2+) as cofactor.

Its subcellular location is the cytoplasm. It carries out the reaction L-threonylcarbamoyladenylate + adenosine(37) in tRNA = N(6)-L-threonylcarbamoyladenosine(37) in tRNA + AMP + H(+). In terms of biological role, required for the formation of a threonylcarbamoyl group on adenosine at position 37 (t(6)A37) in tRNAs that read codons beginning with adenine. Is involved in the transfer of the threonylcarbamoyl moiety of threonylcarbamoyl-AMP (TC-AMP) to the N6 group of A37, together with TsaE and TsaB. TsaD likely plays a direct catalytic role in this reaction. This Chlorobium chlorochromatii (strain CaD3) protein is tRNA N6-adenosine threonylcarbamoyltransferase.